The primary structure comprises 1260 residues: ATP-dependent helicase/deoxyribonuclease subunit B (1260 aa).

It belongs to the helicase family. AddB/RexB type 2 subfamily. In terms of assembly, heterodimer of AddA and RexB. Mg(2+) is required as a cofactor.

The heterodimer acts as both an ATP-dependent DNA helicase and an ATP-dependent, dual-direction single-stranded exonuclease. Recognizes the chi site generating a DNA molecule suitable for the initiation of homologous recombination. This subunit has 5' -&gt; 3' nuclease activity but not helicase activity. This Limosilactobacillus reuteri (strain DSM 20016) (Lactobacillus reuteri) protein is ATP-dependent helicase/deoxyribonuclease subunit B.